The primary structure comprises 323 residues: Lipoyl synthase (323 aa).

[4Fe-4S] cluster is bound by residues Cys61, Cys66, Cys72, Cys87, Cys91, Cys94, and Ser300. Residues 73-289 (WDKKHATFMI…ETVAYTKGFL (217 aa)) form the Radical SAM core domain.

The protein belongs to the radical SAM superfamily. Lipoyl synthase family. [4Fe-4S] cluster is required as a cofactor.

The protein localises to the cytoplasm. It carries out the reaction [[Fe-S] cluster scaffold protein carrying a second [4Fe-4S](2+) cluster] + N(6)-octanoyl-L-lysyl-[protein] + 2 oxidized [2Fe-2S]-[ferredoxin] + 2 S-adenosyl-L-methionine + 4 H(+) = [[Fe-S] cluster scaffold protein] + N(6)-[(R)-dihydrolipoyl]-L-lysyl-[protein] + 4 Fe(3+) + 2 hydrogen sulfide + 2 5'-deoxyadenosine + 2 L-methionine + 2 reduced [2Fe-2S]-[ferredoxin]. It functions in the pathway protein modification; protein lipoylation via endogenous pathway; protein N(6)-(lipoyl)lysine from octanoyl-[acyl-carrier-protein]: step 2/2. Functionally, catalyzes the radical-mediated insertion of two sulfur atoms into the C-6 and C-8 positions of the octanoyl moiety bound to the lipoyl domains of lipoate-dependent enzymes, thereby converting the octanoylated domains into lipoylated derivatives. This Sinorhizobium medicae (strain WSM419) (Ensifer medicae) protein is Lipoyl synthase.